A 503-amino-acid polypeptide reads, in one-letter code: Maturase K (503 aa).

It belongs to the intron maturase 2 family. MatK subfamily.

The protein resides in the plastid. It is found in the chloroplast. Usually encoded in the trnK tRNA gene intron. Probably assists in splicing its own and other chloroplast group II introns. The sequence is that of Maturase K from Rosa foetida (Austrian briar).